Here is a 782-residue protein sequence, read N- to C-terminus: DnaJ homolog subfamily C member 16 (782 aa).

The signal sequence occupies residues 1–25; the sequence is MEVRKLSISWQFLIVLVLILQILSA. Residues 26–535 are Cytoplasmic-facing; sequence LDFDPYRVLG…DSIFHNNWRE (510 aa). A J domain is found at 29–93; that stretch reads DPYRVLGVSR…EKRSNYDQYG (65 aa). A Thioredoxin domain is found at 119–247; that stretch reads FYFDESFFHF…LRQFVESLLP (129 aa). Residues 536–556 form a helical; Anchor for type IV membrane protein membrane-spanning segment; that stretch reads MMPLLSLIFSALFILFGTVIV. Residues 557–782 are Extracellular-facing; that stretch reads QAFSDSNDER…FYIPSWPELD (226 aa). Positions 562 to 593 are disordered; the sequence is SNDERESSPPEKEEAQEKTGKTEPSFTKENSS. Residues 563 to 582 are compositionally biased toward basic and acidic residues; sequence NDERESSPPEKEEAQEKTGK. Polar residues predominate over residues 583–593; the sequence is TEPSFTKENSS. Residue Asn631 is glycosylated (N-linked (GlcNAc...) asparagine).

The protein resides in the endoplasmic reticulum membrane. Its function is as follows. Plays an important role in regulating the size of autophagosomes during the formation process. This chain is DnaJ homolog subfamily C member 16 (DNAJC16), found in Homo sapiens (Human).